Here is a 347-residue protein sequence, read N- to C-terminus: NADH-quinone oxidoreductase subunit H (347 aa).

A run of 8 helical transmembrane segments spans residues 21–41 (IAGI…IIYA), 87–107 (GLFL…WAVI), 120–140 (VGLL…VIAG), 160–180 (ISYE…AGTF), 194–214 (WIIN…MFLI), 259–279 (LLMC…PLDI), 282–302 (LYLV…FFIF), and 324–344 (VFLP…MATG).

It belongs to the complex I subunit 1 family. In terms of assembly, NDH-1 is composed of 14 different subunits. Subunits NuoA, H, J, K, L, M, N constitute the membrane sector of the complex.

The protein localises to the cell inner membrane. It carries out the reaction a quinone + NADH + 5 H(+)(in) = a quinol + NAD(+) + 4 H(+)(out). Its function is as follows. NDH-1 shuttles electrons from NADH, via FMN and iron-sulfur (Fe-S) centers, to quinones in the respiratory chain. The immediate electron acceptor for the enzyme in this species is believed to be ubiquinone. Couples the redox reaction to proton translocation (for every two electrons transferred, four hydrogen ions are translocated across the cytoplasmic membrane), and thus conserves the redox energy in a proton gradient. This subunit may bind ubiquinone. The chain is NADH-quinone oxidoreductase subunit H from Novosphingobium aromaticivorans (strain ATCC 700278 / DSM 12444 / CCUG 56034 / CIP 105152 / NBRC 16084 / F199).